The following is a 743-amino-acid chain: MMTQANAYFYDGADVALLNGQYTDVFSLLGMHSANEGKALIVRCFLRNALSVDVISIKDGRKVASLDKVNEQGLFAGTLGRRVKPFLYLLRVEYPQCQLDIVDPYQFDSLLNSDDIYLFGEGSAERAYEFLGANWRQTQGVEGVHFCVWAPNAKRVSVVGDFNHWDDTRHVMRQHLANGLWELFLPNVVEGAHYKFDLVYQNGERHAKSDPMATQMECAPHNASIVPPKAHHSWNDTAWMSKRAATAWHKAPMSAYEVHLGSWRRKGEQGEQYLDYQDLIEQLIPYVKEQGFTHIELMPISEFPFDGSWGYQPVGLYAPTHRFGDANGLKAFVDACHQAGIGIILDWVSAHFPKDPHGLVRFDGTCLYEHEDPRKGTHPDWDTLIYNYDRGEVRSFLLSNACYWLREFHFDGLRLDAVSSMLYLDYSREPGQWLPNTYGGRENLEAINFLQILNQRLYQAFPGICMIAEESTAFAGVTKPTDQQGLGFGFKWNMGWMNDSLSYLGRDPLYRQFHHHQLTFSLMYAYTEQFMLSVSHDEVVHGKGSLLHKIPGDDWQKFATLRAYYGFMWGHPGKKLLFMGCEFGQRNEWNHNQSLDWHLLAYEPHQGVQRWLKDLNHLYQAMPALSVQDYEGAGFSWLDCENSRDSIFTFVRYGLAGDAPLVFVINMTPQLHTGFRIGLPLAGDYREYLNSDSQIYGGSNQGNAGTVVAESLPWQGMAQSALITVPPLGCLVIGPATGLAEAN.

Catalysis depends on D416, which acts as the Nucleophile. E469 (proton donor) is an active-site residue.

It belongs to the glycosyl hydrolase 13 family. GlgB subfamily. As to quaternary structure, monomer.

It catalyses the reaction Transfers a segment of a (1-&gt;4)-alpha-D-glucan chain to a primary hydroxy group in a similar glucan chain.. It functions in the pathway glycan biosynthesis; glycogen biosynthesis. In terms of biological role, catalyzes the formation of the alpha-1,6-glucosidic linkages in glycogen by scission of a 1,4-alpha-linked oligosaccharide from growing alpha-1,4-glucan chains and the subsequent attachment of the oligosaccharide to the alpha-1,6 position. This is 1,4-alpha-glucan branching enzyme GlgB from Shewanella baltica (strain OS223).